Consider the following 748-residue polypeptide: CCR4-NOT transcription complex subunit 10-A (748 aa).

The span at 1-17 (MAADKAGEQGAEKHEDS) shows a compositional bias: basic and acidic residues. Disordered stretches follow at residues 1 to 25 (MAAD…GISD), 184 to 205 (SNNK…EPFA), 483 to 524 (KQEN…PPSS), and 605 to 635 (VSLG…QMPQ). Residues 185 to 200 (NNKNGKNNETNSNANN) show a composition bias toward low complexity. Composition is skewed to polar residues over residues 487 to 509 (GSKT…VCSN) and 605 to 615 (VSLGVSSNEQE).

The protein belongs to the CNOT10 family. In terms of assembly, component of the CCR4-NOT complex. cnot10 and cnot11 form a subcomplex docked to the cnot1 scaffold.

Its subcellular location is the cytoplasm. The protein localises to the nucleus. Component of the CCR4-NOT complex which is one of the major cellular mRNA deadenylases and is linked to various cellular processes including bulk mRNA degradation, miRNA-mediated repression, translational repression during translational initiation and general transcription regulation. Additional complex functions may be a consequence of its influence on mRNA expression. Is not required for association of CNOT7 to the CCR4-NOT complex. The chain is CCR4-NOT transcription complex subunit 10-A (cnot10-a) from Xenopus laevis (African clawed frog).